We begin with the raw amino-acid sequence, 247 residues long: Chymase (247 aa).

An N-terminal signal peptide occupies residues 1–19 (MHLLTLHLLLLLLGSSTKA). A propeptide spans 20-21 (GE) (activation peptide). One can recognise a Peptidase S1 domain in the interval 22-245 (IIGGTECIPH…YRPWINKILR (224 aa)). A disulfide bond links C51 and C67. H66 acts as the Charge relay system in catalysis. N80 carries an N-linked (GlcNAc...) asparagine glycan. D110 serves as the catalytic Charge relay system. Intrachain disulfides connect C144-C209 and C175-C188. S203 serves as the catalytic Charge relay system.

It belongs to the peptidase S1 family. Granzyme subfamily. Mast cells.

Its subcellular location is the secreted. It localises to the cytoplasmic granule. It catalyses the reaction Preferential cleavage: Phe-|-Xaa &gt; Tyr-|-Xaa &gt; Trp-|-Xaa &gt; Leu-|-Xaa.. Major secreted protease of mast cells with suspected roles in vasoactive peptide generation, extracellular matrix degradation, and regulation of gland secretion. The sequence is that of Chymase (Cma1) from Mus musculus (Mouse).